The following is a 111-amino-acid chain: Cryptic phage CTXphi transcriptional repressor RstR (111 aa).

An HTH cro/C1-type domain is found at 6 to 60 (IRDLRVERDLNQEEVANGIGVGKNTYLAYEKGTQSPKLETVEKLAKFYGVPIAEL). Residues 17 to 36 (QEEVANGIGVGKNTYLAYEK) constitute a DNA-binding region (H-T-H motif).

Its function is as follows. Transcriptional repressor of the integrated CTXPhi phage gene rstA2. The chain is Cryptic phage CTXphi transcriptional repressor RstR (rstR) from Vibrio cholerae.